We begin with the raw amino-acid sequence, 675 residues long: Alpha-1,4-glucan:maltose-1-phosphate maltosyltransferase (675 aa).

Alpha-maltose 1-phosphate-binding residues include Lys256, Gln316, and Asp351. Asp386 serves as the catalytic Nucleophile. Asn387 is an alpha-maltose 1-phosphate binding site. Glu415 acts as the Proton donor in catalysis. An alpha-maltose 1-phosphate-binding site is contributed by 525–526 (KY).

This sequence belongs to the glycosyl hydrolase 13 family. GlgE subfamily. As to quaternary structure, homodimer.

It carries out the reaction alpha-maltose 1-phosphate + [(1-&gt;4)-alpha-D-glucosyl](n) = [(1-&gt;4)-alpha-D-glucosyl](n+2) + phosphate. Its function is as follows. Maltosyltransferase that uses maltose 1-phosphate (M1P) as the sugar donor to elongate linear or branched alpha-(1-&gt;4)-glucans. Is involved in a branched alpha-glucan biosynthetic pathway from trehalose, together with TreS, Mak and GlgB. The sequence is that of Alpha-1,4-glucan:maltose-1-phosphate maltosyltransferase from Corynebacterium glutamicum (strain ATCC 13032 / DSM 20300 / JCM 1318 / BCRC 11384 / CCUG 27702 / LMG 3730 / NBRC 12168 / NCIMB 10025 / NRRL B-2784 / 534).